The primary structure comprises 396 residues: Bifunctional enzyme Fae/Hps (396 aa).

The tract at residues 1 to 161 (MMLIGEALIG…HEKDRAAHAV (161 aa)) is formaldehyde-activating enzyme. The active-site Proton donor is H17. D19, L48, K66, T68, and Q83 together coordinate substrate. Positions 162–396 (MGFKISKLWD…IDQFRIMTDF (235 aa)) are 3-hexulose-6-phosphate synthase.

This sequence in the N-terminal section; belongs to the formaldehyde-activating enzyme family. It in the C-terminal section; belongs to the HPS/KGPDC family. HPS subfamily.

The enzyme catalyses 5,6,7,8-tetrahydromethanopterin + formaldehyde = 5,10-methylenetetrahydromethanopterin + H2O. The catalysed reaction is D-ribulose 5-phosphate + formaldehyde = D-arabino-hex-3-ulose 6-phosphate. It functions in the pathway carbohydrate biosynthesis; D-ribose 5-phosphate biosynthesis. Its function is as follows. Catalyzes the condensation of formaldehyde with tetrahydromethanopterin (H(4)MPT) to 5,10-methylenetetrahydromethanopterin. Catalyzes the reversible formation of ribulose-5-phosphate and formaldehyde from 3-hexulose-6-phosphate. In Methanococcoides burtonii (strain DSM 6242 / NBRC 107633 / OCM 468 / ACE-M), this protein is Bifunctional enzyme Fae/Hps.